A 518-amino-acid chain; its full sequence is Glutamate--cysteine ligase (518 aa).

This sequence belongs to the glutamate--cysteine ligase type 1 family. Type 1 subfamily.

The catalysed reaction is L-cysteine + L-glutamate + ATP = gamma-L-glutamyl-L-cysteine + ADP + phosphate + H(+). It participates in sulfur metabolism; glutathione biosynthesis; glutathione from L-cysteine and L-glutamate: step 1/2. The protein is Glutamate--cysteine ligase of Salmonella paratyphi C (strain RKS4594).